Consider the following 378-residue polypeptide: UPF0754 membrane protein Bcer98_0694 (378 aa).

A helical transmembrane segment spans residues 358 to 378 (LGALLGGTIGLMQGILLLFLM).

This sequence belongs to the UPF0754 family.

Its subcellular location is the cell membrane. The sequence is that of UPF0754 membrane protein Bcer98_0694 from Bacillus cytotoxicus (strain DSM 22905 / CIP 110041 / 391-98 / NVH 391-98).